We begin with the raw amino-acid sequence, 299 residues long: Protein LacX, plasmid (299 aa).

The polypeptide is Protein LacX, plasmid (lacX) (Lactococcus lactis subsp. lactis (Streptococcus lactis)).